Consider the following 624-residue polypeptide: FAD-dependent monooxygenase apdD (624 aa).

Residues glutamate 73 and aspartate 359 each coordinate FAD.

Belongs to the paxM FAD-dependent monooxygenase family. FAD serves as cofactor.

It functions in the pathway secondary metabolite biosynthesis. Its function is as follows. FAD-dependent monooxygenase; part of the gene cluster that mediates the biosynthesis of aspyridones. The polyketide-amino acid backbone preaspyridone A is first assembled by the PKS-NRPS hybrid apdA. The assembly of preaspyridone A is initiated by loading of malonyl-CoA onto apdA, followed by decarboxylation to yield the acetyl starter unit. The growing polyketide chain then elongates into a tetraketide. The adpA PKS module catalyzes three Claisen condensations, as well as beta-keto processing and methylation. Alpha-methylation step during polyketide synthesis is a prerequisite and a key checkpoint for chain transfer between PKS and NRPS modules. The downstream NRPS module contains the condensation (C), adenylation (A), and thiolation (T) domains and catalyzes the incorporation of tyrosine via the formation of the L-tyrosinyl-thioester and the amide linkage between L-tyrosinyl-thioester and the tetraketide. The bimodular assembly line is terminated with a reductase (R) domain that facilitates formation and release of the tetramic acid product. Because apdA lacks a designated enoylreductase (ER) domain, the required activity is provided the enoyl reductase apdC. ApdC appears to operate with different stereoselectivity in different PKS cycle. Combined with apdC, apdA is proposed to synthesize preaspyridone A via about 20 enzymatic steps. A number of oxidative steps performed successively by the cytochrome P450 monooxygenases apdE and apdB are required for the conversion of preaspyridone A to aspyridone A. The cytochrome P450 monooxygenase apdE is responsible for the oxidative dephenylation of preaspyridone A. Finally, the predicted FAD-dependent monooxygenase apdD and the acyl-CoA dehydrogenase apdG may be involved in the transformation of aspyridone A into aspyridone B. The sequence is that of FAD-dependent monooxygenase apdD from Emericella nidulans (strain FGSC A4 / ATCC 38163 / CBS 112.46 / NRRL 194 / M139) (Aspergillus nidulans).